The primary structure comprises 318 residues: DNA-directed RNA polymerase subunit alpha 2 (318 aa).

Positions 1–227 (MALENLLHPT…NQLRNIVDIE (227 aa)) are alpha N-terminal domain (alpha-NTD). An alpha C-terminal domain (alpha-CTD) region spans residues 242–318 (INPILLKHVE…TLIENWPQDL (77 aa)).

The protein belongs to the RNA polymerase alpha chain family. As to quaternary structure, homodimer. The RNAP catalytic core consists of 2 alpha, 1 beta, 1 beta' and 1 omega subunit. When a sigma factor is associated with the core the holoenzyme is formed, which can initiate transcription.

It carries out the reaction RNA(n) + a ribonucleoside 5'-triphosphate = RNA(n+1) + diphosphate. Its function is as follows. DNA-dependent RNA polymerase catalyzes the transcription of DNA into RNA using the four ribonucleoside triphosphates as substrates. This Francisella tularensis subsp. novicida (strain U112) protein is DNA-directed RNA polymerase subunit alpha 2.